Reading from the N-terminus, the 256-residue chain is UPF0259 membrane protein YPO2199/y2042/YP_1997 (256 aa).

6 helical membrane-spanning segments follow: residues Ile-20–Thr-40, Phe-90–Val-110, Ala-118–Ile-138, Leu-141–Leu-161, Leu-192–Ser-212, and Ile-221–Leu-241.

Belongs to the UPF0259 family.

It localises to the cell inner membrane. The protein is UPF0259 membrane protein YPO2199/y2042/YP_1997 of Yersinia pestis.